The chain runs to 392 residues: Galactokinase (392 aa).

Residues Arg-37, Glu-43, His-44, and Asp-46 each coordinate alpha-D-galactose. ATP contacts are provided by Gly-136, Gly-138, Ser-140, and Ser-141. Asp-186 is a binding site for alpha-D-galactose. The active-site Proton acceptor is Asp-186. Ser-230 carries the phosphoserine modification. Alpha-D-galactose is bound at residue Tyr-236.

This sequence belongs to the GHMP kinase family. GalK subfamily. In terms of assembly, homodimer.

It carries out the reaction alpha-D-galactose + ATP = alpha-D-galactose 1-phosphate + ADP + H(+). Its pathway is carbohydrate metabolism; galactose metabolism. Catalyzes the transfer of a phosphate from ATP to alpha-D-galactose and participates in the first committed step in the catabolism of galactose. The sequence is that of Galactokinase from Homo sapiens (Human).